The following is a 368-amino-acid chain: Protein trichome birefringence-like 43 (368 aa).

A helical; Signal-anchor for type II membrane protein membrane pass occupies residues 9–25 (GVVSVMVLMILVLLKQI). The GDS motif signature appears at 117–119 (GDS). Positions 344–358 (DCSHWCLSGVPDSWN) match the DCXHWCLPGXXDXWN motif motif.

This sequence belongs to the PC-esterase family. TBL subfamily.

Its subcellular location is the membrane. Its function is as follows. May act as a bridging protein that binds pectin and other cell wall polysaccharides. Probably involved in maintaining esterification of pectins. May be involved in the specific O-acetylation of cell wall polymers. This Arabidopsis thaliana (Mouse-ear cress) protein is Protein trichome birefringence-like 43 (TBL43).